The sequence spans 312 residues: Olfactory receptor 4F15 (312 aa).

Residues Met-1–Leu-25 lie on the Extracellular side of the membrane. An N-linked (GlcNAc...) asparagine glycan is attached at Asn-5. Residues Leu-26–Val-49 form a helical membrane-spanning segment. The Cytoplasmic portion of the chain corresponds to Thr-50–Ser-57. Residues Pro-58 to Pro-79 form a helical membrane-spanning segment. Residues Lys-80 to Gln-100 are Extracellular-facing. Cysteines 97 and 189 form a disulfide. A helical transmembrane segment spans residues Ile-101–Phe-120. The Cytoplasmic segment spans residues Asp-121–Arg-139. A helical membrane pass occupies residues Met-140 to Val-158. Residues Gln-159–Leu-195 lie on the Extracellular side of the membrane. A helical membrane pass occupies residues Glu-196–Ile-219. The Cytoplasmic portion of the chain corresponds to Phe-220–Lys-235. A helical transmembrane segment spans residues Ala-236–Tyr-258. The Extracellular portion of the chain corresponds to Thr-259–Lys-269. A helical membrane pass occupies residues Tyr-270–Phe-289. Residues Arg-290–Leu-312 are Cytoplasmic-facing.

This sequence belongs to the G-protein coupled receptor 1 family.

It is found in the cell membrane. Odorant receptor. This is Olfactory receptor 4F15 (OR4F15) from Homo sapiens (Human).